Here is a 446-residue protein sequence, read N- to C-terminus: Rhamnogalacturonase A (446 aa).

An N-terminal signal peptide occupies residues 1 to 18 (MPALPILALALAPLLVNG). Cys39 and Cys65 form a disulfide bridge. N-linked (GlcNAc...) asparagine glycans are attached at residues Asn50, Asn115, and Asn124. Residue Asp216 is the Proton donor of the active site. Cys218 and Cys235 are oxidised to a cystine. Residues Asn236, Asn281, and Asn318 are each glycosylated (N-linked (GlcNAc...) asparagine). Cystine bridges form between Cys341–Cys347 and Cys369–Cys378.

Belongs to the glycosyl hydrolase 28 family.

The protein localises to the secreted. It catalyses the reaction Endohydrolysis of alpha-D-GalA-(1-&gt;2)-alpha-L-Rha glycosidic bond in the rhamnogalacturonan I backbone with initial inversion of anomeric configuration releasing oligosaccharides with beta-D-GalA at the reducing end.. Functionally, pectinolytic enzymes consist of four classes of enzymes: pectine lyase, polygalacturonase, pectin methylesterase and rhamnogalacturonase. Hydrolyzes alpha-D-galacturonopyranosyl-(1,2)-alpha-L-rhamnopyranosyl linkages in the backbone of the hairy regions of pectins. This chain is Rhamnogalacturonase A (rhgA), found in Aspergillus niger.